The sequence spans 554 residues: Phospholipase B-like protein E (554 aa).

A signal peptide spans 1–19 (MKLFILLIVIVFLISNSYS). 6 N-linked (GlcNAc...) asparagine glycosylation sites follow: Asn-113, Asn-140, Asn-231, Asn-302, Asn-340, and Asn-546.

The protein belongs to the phospholipase B-like family.

It is found in the secreted. Its function is as follows. Probable phospholipase. The chain is Phospholipase B-like protein E (plbE) from Dictyostelium discoideum (Social amoeba).